A 122-amino-acid polypeptide reads, in one-letter code: UPF0102 protein VIBHAR_00890 (122 aa).

Belongs to the UPF0102 family.

This chain is UPF0102 protein VIBHAR_00890, found in Vibrio campbellii (strain ATCC BAA-1116).